The following is a 450-amino-acid chain: UDP-N-acetylmuramoylalanine--D-glutamate ligase (450 aa).

119 to 125 (GSNGKTT) is an ATP binding site.

The protein belongs to the MurCDEF family.

It localises to the cytoplasm. The catalysed reaction is UDP-N-acetyl-alpha-D-muramoyl-L-alanine + D-glutamate + ATP = UDP-N-acetyl-alpha-D-muramoyl-L-alanyl-D-glutamate + ADP + phosphate + H(+). It participates in cell wall biogenesis; peptidoglycan biosynthesis. Cell wall formation. Catalyzes the addition of glutamate to the nucleotide precursor UDP-N-acetylmuramoyl-L-alanine (UMA). The chain is UDP-N-acetylmuramoylalanine--D-glutamate ligase from Bacillus cereus (strain Q1).